The following is a 207-amino-acid chain: Small ribosomal subunit protein uS4 (207 aa).

The interval 33 to 54 (KLDSKPGQHGRTSGARTSDYGN) is disordered. The segment covering 42 to 53 (GRTSGARTSDYG) has biased composition (polar residues). The region spanning 97-160 (SRLDNVVYRM…KKQVRIAEAL (64 aa)) is the S4 RNA-binding domain.

It belongs to the universal ribosomal protein uS4 family. As to quaternary structure, part of the 30S ribosomal subunit. Contacts protein S5. The interaction surface between S4 and S5 is involved in control of translational fidelity.

One of the primary rRNA binding proteins, it binds directly to 16S rRNA where it nucleates assembly of the body of the 30S subunit. Functionally, with S5 and S12 plays an important role in translational accuracy. The polypeptide is Small ribosomal subunit protein uS4 (Cupriavidus necator (strain ATCC 17699 / DSM 428 / KCTC 22496 / NCIMB 10442 / H16 / Stanier 337) (Ralstonia eutropha)).